Here is a 237-residue protein sequence, read N- to C-terminus: DNA repair protein RecO (237 aa).

The protein belongs to the RecO family.

Involved in DNA repair and RecF pathway recombination. This chain is DNA repair protein RecO, found in Rickettsia rickettsii (strain Iowa).